The following is a 209-amino-acid chain: Large ribosomal subunit protein bL9 (209 aa).

The interval 184 to 209 (SAASEDSDLVETPEDRATEEAEDEQP) is disordered.

The protein belongs to the bacterial ribosomal protein bL9 family.

Its function is as follows. Binds to the 23S rRNA. The chain is Large ribosomal subunit protein bL9 from Dinoroseobacter shibae (strain DSM 16493 / NCIMB 14021 / DFL 12).